The chain runs to 87 residues: Small ribosomal subunit protein uS17 (87 aa).

The protein belongs to the universal ribosomal protein uS17 family. As to quaternary structure, part of the 30S ribosomal subunit.

Functionally, one of the primary rRNA binding proteins, it binds specifically to the 5'-end of 16S ribosomal RNA. The protein is Small ribosomal subunit protein uS17 of Exiguobacterium sibiricum (strain DSM 17290 / CCUG 55495 / CIP 109462 / JCM 13490 / 255-15).